A 611-amino-acid polypeptide reads, in one-letter code: Dual specificity protein phosphatase CDC14AB (611 aa).

Positions 23–178 (DLLGASEFIK…ALQHGFLNFE (156 aa)) are a. Residues 179–192 (TFDVNEYEHYERVE) are linker. The interval 193-359 (NGDLNWITPG…HGDSLRSKQR (167 aa)) is b. Positions 194 to 352 (GDLNWITPGK…KQASLWAHGD (159 aa)) constitute a Tyrosine-protein phosphatase domain. Cys294 serves as the catalytic Phosphocysteine intermediate. The disordered stretch occupies residues 408–611 (KLRALKGRRQ…PSLQSEYVQY (204 aa)). Residues 456-490 (SPLKSSKVPASSSSSSSSSSVSASAKRIGRSSSSS) show a composition bias toward low complexity. The segment covering 491 to 511 (TNLKSTRLASSLGNLYEPNTE) has biased composition (polar residues). Over residues 512–553 (SISSGKPPSPSSFTPHPVRTTYNYHYEVNNNNNQYSTTSSPS) the composition is skewed to low complexity. Composition is skewed to polar residues over residues 554 to 569 (KSLG…SGAS) and 591 to 611 (GLST…YVQY).

This sequence belongs to the protein-tyrosine phosphatase family. Non-receptor class CDC14 subfamily.

Its subcellular location is the nucleus. The protein resides in the cytoplasm. The protein localises to the cytoskeleton. It is found in the microtubule organizing center. It localises to the centrosome. Its subcellular location is the spindle pole. The protein resides in the spindle. The protein localises to the cell projection. It is found in the kinocilium. It carries out the reaction O-phospho-L-tyrosyl-[protein] + H2O = L-tyrosyl-[protein] + phosphate. It catalyses the reaction O-phospho-L-seryl-[protein] + H2O = L-seryl-[protein] + phosphate. The catalysed reaction is O-phospho-L-threonyl-[protein] + H2O = L-threonyl-[protein] + phosphate. Functionally, dual-specificity phosphatase. Required for centrosome separation and productive cytokinesis during cell division. Dephosphorylates SIRT2 around early anaphase. May dephosphorylate the APC subunit FZR1/CDH1, thereby promoting APC-FZR1 dependent degradation of mitotic cyclins and subsequent exit from mitosis. The chain is Dual specificity protein phosphatase CDC14AB (cdc14ab) from Danio rerio (Zebrafish).